A 571-amino-acid polypeptide reads, in one-letter code: Hemagglutinin-neuraminidase (571 aa).

Topologically, residues 1–26 (MDRAVSRVVLENEEREAKNTWRFVFR) are intravirion. A helical transmembrane segment spans residues 27 to 47 (IAVLLLIVMTLAISAAALVYS). Residues 48–571 (MGASTPRDLA…LVEILKDDRV (524 aa)) lie on the Virion surface side of the membrane. Residue Asn-119 is glycosylated (N-linked (GlcNAc...) asparagine; by host). The segment at 124–152 (GAPVHDPDYIGGIGKELIVDDTSDVTSFY) is important for interaction with fusion/F protein. Cystine bridges form between Cys-172–Cys-196, Cys-186–Cys-247, and Cys-238–Cys-251. The tract at residues 234–239 (NRKSCS) is involved in neuraminidase activity. A glycan (N-linked (GlcNAc...) asparagine; by host) is linked at Asn-341. The cysteines at positions 455 and 465 are disulfide-linked. Residues Asn-481 and Asn-508 are each glycosylated (N-linked (GlcNAc...) asparagine; by host). Residues Cys-531 and Cys-542 are joined by a disulfide bond.

Belongs to the paramyxoviruses hemagglutinin-neuraminidase family. Homotetramer; composed of disulfide-linked homodimers. Interacts with F protein trimer. Interacts with host CG-1B; this interaction inhibits viral adsorption and replication rather than internalization.

It localises to the virion membrane. The protein localises to the host cell membrane. The enzyme catalyses Hydrolysis of alpha-(2-&gt;3)-, alpha-(2-&gt;6)-, alpha-(2-&gt;8)- glycosidic linkages of terminal sialic acid residues in oligosaccharides, glycoproteins, glycolipids, colominic acid and synthetic substrates.. In terms of biological role, mediates the viral entry into the host cell together with fusion/F protein. Attaches the virus to sialic acid-containing cell receptors and thereby initiates infection. Binding of HN protein to the receptor induces a conformational change that allows the F protein to trigger virion/cell membranes fusion. Its function is as follows. Neuraminidase activity ensures the efficient spread of the virus by dissociating the mature virions from the neuraminic acid containing glycoproteins. The sequence is that of Hemagglutinin-neuraminidase (HN) from Newcastle disease virus (strain Iba/85) (NDV).